Consider the following 113-residue polypeptide: UPF0482 protein YnfB (113 aa).

A signal peptide spans 1–28 (MNILSGKLPFLLGAVFAGSVVLATSVQA).

It belongs to the UPF0482 family.

The chain is UPF0482 protein YnfB from Escherichia fergusonii (strain ATCC 35469 / DSM 13698 / CCUG 18766 / IAM 14443 / JCM 21226 / LMG 7866 / NBRC 102419 / NCTC 12128 / CDC 0568-73).